The primary structure comprises 314 residues: 3'-5' exoribonuclease YhaM (314 aa).

The 117-residue stretch at 163 to 279 (HVVSMLDLAK…LHYIDNLDAK (117 aa)) folds into the HD domain.

Belongs to the YhaM family.

In terms of biological role, shows a 3'-5' exoribonuclease activity. This Bacillus cereus (strain AH187) protein is 3'-5' exoribonuclease YhaM.